A 282-amino-acid chain; its full sequence is Release factor glutamine methyltransferase (282 aa).

S-adenosyl-L-methionine is bound by residues 120–124, Asp143, and Asn189; that span reads GVGSG. 189–192 provides a ligand contact to substrate; it reads NPPY.

This sequence belongs to the protein N5-glutamine methyltransferase family. PrmC subfamily.

The catalysed reaction is L-glutaminyl-[peptide chain release factor] + S-adenosyl-L-methionine = N(5)-methyl-L-glutaminyl-[peptide chain release factor] + S-adenosyl-L-homocysteine + H(+). Methylates the class 1 translation termination release factors RF1/PrfA and RF2/PrfB on the glutamine residue of the universally conserved GGQ motif. The sequence is that of Release factor glutamine methyltransferase from Dictyoglomus turgidum (strain DSM 6724 / Z-1310).